Here is a 340-residue protein sequence, read N- to C-terminus: S-adenosylmethionine:tRNA ribosyltransferase-isomerase (340 aa).

The protein belongs to the QueA family. Monomer.

It localises to the cytoplasm. The enzyme catalyses 7-aminomethyl-7-carbaguanosine(34) in tRNA + S-adenosyl-L-methionine = epoxyqueuosine(34) in tRNA + adenine + L-methionine + 2 H(+). It functions in the pathway tRNA modification; tRNA-queuosine biosynthesis. Its function is as follows. Transfers and isomerizes the ribose moiety from AdoMet to the 7-aminomethyl group of 7-deazaguanine (preQ1-tRNA) to give epoxyqueuosine (oQ-tRNA). The chain is S-adenosylmethionine:tRNA ribosyltransferase-isomerase from Aliarcobacter butzleri (strain RM4018) (Arcobacter butzleri).